The sequence spans 505 residues: Glutamyl-tRNA(Gln) amidotransferase subunit A (505 aa).

Residues Lys-80 and Ser-155 each act as charge relay system in the active site. Ser-179 serves as the catalytic Acyl-ester intermediate.

The protein belongs to the amidase family. GatA subfamily. In terms of assembly, heterotrimer of A, B and C subunits.

It catalyses the reaction L-glutamyl-tRNA(Gln) + L-glutamine + ATP + H2O = L-glutaminyl-tRNA(Gln) + L-glutamate + ADP + phosphate + H(+). In terms of biological role, allows the formation of correctly charged Gln-tRNA(Gln) through the transamidation of misacylated Glu-tRNA(Gln) in organisms which lack glutaminyl-tRNA synthetase. The reaction takes place in the presence of glutamine and ATP through an activated gamma-phospho-Glu-tRNA(Gln). This Acidothermus cellulolyticus (strain ATCC 43068 / DSM 8971 / 11B) protein is Glutamyl-tRNA(Gln) amidotransferase subunit A.